A 234-amino-acid polypeptide reads, in one-letter code: Glutathione S-transferase 1 (234 aa).

In terms of domain architecture, GST N-terminal spans 3-90 (LPIIKVHWLD…YVLQHFDHSH (88 aa)). The region spanning 96–234 (DADIADQINY…EKARALGSNF (139 aa)) is the GST C-terminal domain.

Belongs to the GST superfamily. As to quaternary structure, homodimer.

The protein localises to the endoplasmic reticulum membrane. It catalyses the reaction RX + glutathione = an S-substituted glutathione + a halide anion + H(+). The protein is Glutathione S-transferase 1 (GTT1) of Saccharomyces cerevisiae (strain ATCC 204508 / S288c) (Baker's yeast).